A 309-amino-acid polypeptide reads, in one-letter code: Methionyl-tRNA formyltransferase (309 aa).

112–115 (SLLP) lines the (6S)-5,6,7,8-tetrahydrofolate pocket.

It belongs to the Fmt family.

It carries out the reaction L-methionyl-tRNA(fMet) + (6R)-10-formyltetrahydrofolate = N-formyl-L-methionyl-tRNA(fMet) + (6S)-5,6,7,8-tetrahydrofolate + H(+). Its function is as follows. Attaches a formyl group to the free amino group of methionyl-tRNA(fMet). The formyl group appears to play a dual role in the initiator identity of N-formylmethionyl-tRNA by promoting its recognition by IF2 and preventing the misappropriation of this tRNA by the elongation apparatus. The sequence is that of Methionyl-tRNA formyltransferase from Bartonella quintana (strain Toulouse) (Rochalimaea quintana).